Here is a 714-residue protein sequence, read N- to C-terminus: DNA gyrase subunit B (714 aa).

The region spanning 492-606 (SELYVVEGDS…NGHVFLAQPP (115 aa)) is the Toprim domain. Positions 498, 571, and 573 each coordinate Mg(2+).

The protein belongs to the type II topoisomerase GyrB family. In terms of assembly, heterotetramer, composed of two GyrA and two GyrB chains. In the heterotetramer, GyrA contains the active site tyrosine that forms a transient covalent intermediate with DNA, while GyrB binds cofactors and catalyzes ATP hydrolysis. The cofactor is Mg(2+). Mn(2+) serves as cofactor. It depends on Ca(2+) as a cofactor.

The protein resides in the cytoplasm. The enzyme catalyses ATP-dependent breakage, passage and rejoining of double-stranded DNA.. With respect to regulation, DNA supercoiling is inhibited by EDTA, novobiocin, coumermycin and ciprofloxacin. A type II topoisomerase that negatively supercoils closed circular double-stranded DNA in an ATP-dependent manner and also catalyzes the interconversion of other topological isomers of double-stranded DNA rings, including catenanes and knotted rings. Relaxes negatively supercoiled DNA in an ATP-independent manner. A linear reaction intermediate can be trapped in the presence of the antibiotic ciprofloxacin. Negative supercoiling favors strand separation, and DNA replication, transcription, recombination and repair, all of which involve strand separation. Type II topoisomerases break and join 2 DNA strands simultaneously in an ATP-dependent manner. The protein is DNA gyrase subunit B of Mycobacterium bovis (strain BCG / Pasteur 1173P2).